Reading from the N-terminus, the 464-residue chain is ATP synthase subunit beta (464 aa).

152–159 (GGAGVGKT) contributes to the ATP binding site.

This sequence belongs to the ATPase alpha/beta chains family. As to quaternary structure, F-type ATPases have 2 components, CF(1) - the catalytic core - and CF(0) - the membrane proton channel. CF(1) has five subunits: alpha(3), beta(3), gamma(1), delta(1), epsilon(1). CF(0) has three main subunits: a(1), b(2) and c(9-12). The alpha and beta chains form an alternating ring which encloses part of the gamma chain. CF(1) is attached to CF(0) by a central stalk formed by the gamma and epsilon chains, while a peripheral stalk is formed by the delta and b chains.

The protein resides in the cell membrane. The enzyme catalyses ATP + H2O + 4 H(+)(in) = ADP + phosphate + 5 H(+)(out). Produces ATP from ADP in the presence of a proton gradient across the membrane. The catalytic sites are hosted primarily by the beta subunits. This is ATP synthase subunit beta from Ureaplasma parvum serovar 3 (strain ATCC 27815 / 27 / NCTC 11736).